Consider the following 367-residue polypeptide: 7,8-didemethyl-8-hydroxy-5-deazariboflavin synthase (367 aa).

A Radical SAM core domain is found at 39–275 (LTFARNVFVP…AEVGVQVPPN (237 aa)). Residues C53, C57, and C60 each contribute to the [4Fe-4S] cluster site.

The protein belongs to the radical SAM superfamily. CofG family. As to quaternary structure, consists of two subunits, CofG and CofH. The cofactor is [4Fe-4S] cluster.

It carries out the reaction 5-amino-5-(4-hydroxybenzyl)-6-(D-ribitylimino)-5,6-dihydrouracil + S-adenosyl-L-methionine = 7,8-didemethyl-8-hydroxy-5-deazariboflavin + 5'-deoxyadenosine + L-methionine + NH4(+) + H(+). It participates in cofactor biosynthesis; coenzyme F0 biosynthesis. Catalyzes the radical-mediated synthesis of 7,8-didemethyl-8-hydroxy-5-deazariboflavin from 5-amino-5-(4-hydroxybenzyl)-6-(D-ribitylimino)-5,6-dihydrouracil. The protein is 7,8-didemethyl-8-hydroxy-5-deazariboflavin synthase of Halobacterium salinarum (strain ATCC 29341 / DSM 671 / R1).